A 158-amino-acid chain; its full sequence is S-ribosylhomocysteine lyase (158 aa).

Residues histidine 57, histidine 61, and cysteine 125 each coordinate Fe cation.

Belongs to the LuxS family. Homodimer. It depends on Fe cation as a cofactor.

It catalyses the reaction S-(5-deoxy-D-ribos-5-yl)-L-homocysteine = (S)-4,5-dihydroxypentane-2,3-dione + L-homocysteine. Functionally, involved in the synthesis of autoinducer 2 (AI-2) which is secreted by bacteria and is used to communicate both the cell density and the metabolic potential of the environment. The regulation of gene expression in response to changes in cell density is called quorum sensing. Catalyzes the transformation of S-ribosylhomocysteine (RHC) to homocysteine (HC) and 4,5-dihydroxy-2,3-pentadione (DPD). This Deinococcus radiodurans (strain ATCC 13939 / DSM 20539 / JCM 16871 / CCUG 27074 / LMG 4051 / NBRC 15346 / NCIMB 9279 / VKM B-1422 / R1) protein is S-ribosylhomocysteine lyase.